The chain runs to 396 residues: L-lactate dehydrogenase (396 aa).

The region spanning 1-380 (MIISAASDYR…SGDSLVQELG (380 aa)) is the FMN hydroxy acid dehydrogenase domain. Tyr24 contacts substrate. FMN-binding residues include Ser106 and Gln127. Tyr129 lines the substrate pocket. Position 155 (Thr155) interacts with FMN. Residue Arg164 participates in substrate binding. Residue Lys251 coordinates FMN. The active-site Proton acceptor is the His275. A substrate-binding site is contributed by Arg278. Residue 306–330 (DSGIRNGLDVVRMIALGADTVLLGR) participates in FMN binding.

This sequence belongs to the FMN-dependent alpha-hydroxy acid dehydrogenase family. FMN is required as a cofactor.

The protein localises to the cell inner membrane. It carries out the reaction (S)-lactate + A = pyruvate + AH2. In terms of biological role, catalyzes the conversion of L-lactate to pyruvate. Is coupled to the respiratory chain. The chain is L-lactate dehydrogenase from Salmonella arizonae (strain ATCC BAA-731 / CDC346-86 / RSK2980).